The primary structure comprises 177 residues: Peptide methionine sulfoxide reductase MsrA (177 aa).

Residue Cys-15 is part of the active site.

It belongs to the MsrA Met sulfoxide reductase family.

The catalysed reaction is L-methionyl-[protein] + [thioredoxin]-disulfide + H2O = L-methionyl-(S)-S-oxide-[protein] + [thioredoxin]-dithiol. It carries out the reaction [thioredoxin]-disulfide + L-methionine + H2O = L-methionine (S)-S-oxide + [thioredoxin]-dithiol. Functionally, has an important function as a repair enzyme for proteins that have been inactivated by oxidation. Catalyzes the reversible oxidation-reduction of methionine sulfoxide in proteins to methionine. The protein is Peptide methionine sulfoxide reductase MsrA of Listeria monocytogenes serotype 4b (strain CLIP80459).